Reading from the N-terminus, the 255-residue chain is Phycoerythrobilin:ferredoxin oxidoreductase (255 aa).

The protein belongs to the HY2 family.

The enzyme catalyses (3Z)-phycoerythrobilin + oxidized 2[4Fe-4S]-[ferredoxin] = 15,16-dihydrobiliverdin + reduced 2[4Fe-4S]-[ferredoxin] + 2 H(+). In terms of biological role, catalyzes the two-electron reduction of the C2 and C3(1) diene system of 15,16-dihydrobiliverdin. In Nostoc punctiforme (strain ATCC 29133 / PCC 73102), this protein is Phycoerythrobilin:ferredoxin oxidoreductase (pebB).